The following is a 601-amino-acid chain: Beta-phellandrene synthase (601 aa).

A chloroplast-targeting transit peptide spans 1 to 35; that stretch reads MSTISIHHVGILRNPLPSKNKRALINNPWSLSLPR. Mn(2+) contacts are provided by aspartate 356 and aspartate 360. The short motif at 356 to 360 is the DDXXD motif element; that stretch reads DDVYD. Homodimerization stretches follow at residues 362–368 and 434–471; these read YGTLDEL and EAEWYESGYAPSLEEYLSIATISIGLIPIVIPLDLSIP. Mn(2+) is bound by residues aspartate 499 and glutamate 507.

The protein belongs to the terpene synthase family. In terms of assembly, homodimer. The cofactor is Mn(2+). Mg(2+) serves as cofactor. In terms of tissue distribution, expressed in peltate glandular trichomes. Present at low levels in flowers and stems.

The protein localises to the plastid. Its subcellular location is the chloroplast. It catalyses the reaction (2E)-geranyl diphosphate = beta-phellandrene + diphosphate. The catalysed reaction is (2E)-geranyl diphosphate = (1R,5R)-sabinene + diphosphate. It participates in secondary metabolite biosynthesis; terpenoid biosynthesis. Its function is as follows. Involved in the biosynthesis of phenolic monoterpenes natural products. Monoterpene synthase that catalyzes mainly the formation of olefins such as sabinene and beta-phellandrene, and minor amounts of other monoterpenes (e.g. myrcene, gamma-terpinene, alpha-thujene and alpha-pinene) from geranyl diphosphate (GPP). This is Beta-phellandrene synthase from Origanum vulgare (Wild marjoram).